We begin with the raw amino-acid sequence, 263 residues long: Chromosomal replication initiator protein DnaA (263 aa).

A region of interest (domain I, interacts with DnaA modulators) is located at residue glutamate 1. Position 1 (glutamate 1) is a region of interest, domain II. Residues 1 to 179 (ESGMGKTHLL…GSVSRLNFWS (179 aa)) are domain III, AAA+ region. Glycine 3, glycine 5, lysine 6, and threonine 7 together coordinate ATP. The segment at 180 to 263 (QQNPEEKIIT…HTLAQIGEEF (84 aa)) is domain IV, binds dsDNA.

It belongs to the DnaA family. As to quaternary structure, oligomerizes as a right-handed, spiral filament on DNA at oriC.

Its subcellular location is the cytoplasm. In terms of biological role, plays an essential role in the initiation and regulation of chromosomal replication. ATP-DnaA binds to the origin of replication (oriC) to initiate formation of the DNA replication initiation complex once per cell cycle. Binds the DnaA box (a 9 base pair repeat at the origin) and separates the double-stranded (ds)DNA. Forms a right-handed helical filament on oriC DNA; dsDNA binds to the exterior of the filament while single-stranded (ss)DNA is stabiized in the filament's interior. The ATP-DnaA-oriC complex binds and stabilizes one strand of the AT-rich DNA unwinding element (DUE), permitting loading of DNA polymerase. After initiation quickly degrades to an ADP-DnaA complex that is not apt for DNA replication. Binds acidic phospholipids. The protein is Chromosomal replication initiator protein DnaA of Mycoplasma mycoides.